Here is a 300-residue protein sequence, read N- to C-terminus: Acetylglutamate kinase (300 aa).

Substrate-binding positions include 68–69 (GG), Arg90, and Asn195.

This sequence belongs to the acetylglutamate kinase family. ArgB subfamily.

It is found in the cytoplasm. The catalysed reaction is N-acetyl-L-glutamate + ATP = N-acetyl-L-glutamyl 5-phosphate + ADP. Its pathway is amino-acid biosynthesis; L-arginine biosynthesis; N(2)-acetyl-L-ornithine from L-glutamate: step 2/4. Functionally, catalyzes the ATP-dependent phosphorylation of N-acetyl-L-glutamate. This chain is Acetylglutamate kinase, found in Stutzerimonas stutzeri (strain A1501) (Pseudomonas stutzeri).